Reading from the N-terminus, the 237-residue chain is Phosphoribosylaminoimidazole-succinocarboxamide synthase (237 aa).

Belongs to the SAICAR synthetase family.

It catalyses the reaction 5-amino-1-(5-phospho-D-ribosyl)imidazole-4-carboxylate + L-aspartate + ATP = (2S)-2-[5-amino-1-(5-phospho-beta-D-ribosyl)imidazole-4-carboxamido]succinate + ADP + phosphate + 2 H(+). It participates in purine metabolism; IMP biosynthesis via de novo pathway; 5-amino-1-(5-phospho-D-ribosyl)imidazole-4-carboxamide from 5-amino-1-(5-phospho-D-ribosyl)imidazole-4-carboxylate: step 1/2. The protein is Phosphoribosylaminoimidazole-succinocarboxamide synthase of Pseudomonas fluorescens (strain ATCC BAA-477 / NRRL B-23932 / Pf-5).